Consider the following 274-residue polypeptide: Large ribosomal subunit protein uL2 (274 aa).

Positions 221–274 (RGTAMNPVDHPHGGGEGRNFGKHPVTPWGVQTKGKKTRNNKRTDKSIVRRRSKK) are disordered.

The protein belongs to the universal ribosomal protein uL2 family. In terms of assembly, part of the 50S ribosomal subunit. Forms a bridge to the 30S subunit in the 70S ribosome.

Its function is as follows. One of the primary rRNA binding proteins. Required for association of the 30S and 50S subunits to form the 70S ribosome, for tRNA binding and peptide bond formation. It has been suggested to have peptidyltransferase activity; this is somewhat controversial. Makes several contacts with the 16S rRNA in the 70S ribosome. The sequence is that of Large ribosomal subunit protein uL2 from Hamiltonella defensa subsp. Acyrthosiphon pisum (strain 5AT).